The following is a 241-amino-acid chain: Probable 2-phosphosulfolactate phosphatase (241 aa).

It belongs to the ComB family. It depends on Mg(2+) as a cofactor.

It catalyses the reaction (2R)-O-phospho-3-sulfolactate + H2O = (2R)-3-sulfolactate + phosphate. The sequence is that of Probable 2-phosphosulfolactate phosphatase from Gloeothece citriformis (strain PCC 7424) (Cyanothece sp. (strain PCC 7424)).